The chain runs to 469 residues: 1-aminocyclopropane-1-carboxylate synthase 8 (469 aa).

Positions 47 and 85 each coordinate substrate. K272 carries the N6-(pyridoxal phosphate)lysine modification.

This sequence belongs to the class-I pyridoxal-phosphate-dependent aminotransferase family. Homodimer and heterodimer. In vivo, the relevance of heterodimerization with other ACS enzymes is however unsure. Interacts with GRF3. It depends on pyridoxal 5'-phosphate as a cofactor. May be processed at its C-terminus. In terms of tissue distribution, expressed in roots. Expressed at low level in flowers and siliques.

It carries out the reaction S-adenosyl-L-methionine = 1-aminocyclopropane-1-carboxylate + S-methyl-5'-thioadenosine + H(+). Its pathway is alkene biosynthesis; ethylene biosynthesis via S-adenosyl-L-methionine; ethylene from S-adenosyl-L-methionine: step 1/2. 1-aminocyclopropane-1-carboxylate synthase (ACS) enzymes catalyze the conversion of S-adenosyl-L-methionine (SAM) into 1-aminocyclopropane-1-carboxylate (ACC), a direct precursor of ethylene. The polypeptide is 1-aminocyclopropane-1-carboxylate synthase 8 (ACS8) (Arabidopsis thaliana (Mouse-ear cress)).